Here is a 208-residue protein sequence, read N- to C-terminus: Putative thymidylate kinase (208 aa).

The defective ATP-binding stretch occupies residues 8–15 (GIDGSGVS).

The protein belongs to the thymidylate kinase family.

The catalysed reaction is dTMP + ATP = dTDP + ADP. This Aeropyrum pernix (strain ATCC 700893 / DSM 11879 / JCM 9820 / NBRC 100138 / K1) protein is Putative thymidylate kinase (tmk).